The sequence spans 206 residues: Glycerol-3-phosphate acyltransferase (206 aa).

A run of 6 helical transmembrane segments spans residues 4–24, 53–73, 86–106, 116–136, 137–157, and 160–180; these read TAFA…AVIV, LAAA…VALA, GIAL…FFGF, VGIL…TWLF, MAFV…LAPV, and FFIL…AIVV.

It belongs to the PlsY family. In terms of assembly, probably interacts with PlsX.

It localises to the cell inner membrane. It carries out the reaction an acyl phosphate + sn-glycerol 3-phosphate = a 1-acyl-sn-glycero-3-phosphate + phosphate. It participates in lipid metabolism; phospholipid metabolism. In terms of biological role, catalyzes the transfer of an acyl group from acyl-phosphate (acyl-PO(4)) to glycerol-3-phosphate (G3P) to form lysophosphatidic acid (LPA). This enzyme utilizes acyl-phosphate as fatty acyl donor, but not acyl-CoA or acyl-ACP. The sequence is that of Glycerol-3-phosphate acyltransferase from Chromobacterium violaceum (strain ATCC 12472 / DSM 30191 / JCM 1249 / CCUG 213 / NBRC 12614 / NCIMB 9131 / NCTC 9757 / MK).